A 287-amino-acid chain; its full sequence is Acetyl-coenzyme A carboxylase carboxyl transferase subunit beta (287 aa).

Residues 25–287 (IWTKCSGCVQ…KLTQQSFSEK (263 aa)) form the CoA carboxyltransferase N-terminal domain. 4 residues coordinate Zn(2+): Cys29, Cys32, Cys48, and Cys51. The C4-type zinc-finger motif lies at 29–51 (CSGCVQLLYTKELERNLQVCPKC).

It belongs to the AccD/PCCB family. As to quaternary structure, acetyl-CoA carboxylase is a heterohexamer composed of biotin carboxyl carrier protein (AccB), biotin carboxylase (AccC) and two subunits each of ACCase subunit alpha (AccA) and ACCase subunit beta (AccD). The cofactor is Zn(2+).

It is found in the cytoplasm. It catalyses the reaction N(6)-carboxybiotinyl-L-lysyl-[protein] + acetyl-CoA = N(6)-biotinyl-L-lysyl-[protein] + malonyl-CoA. Its pathway is lipid metabolism; malonyl-CoA biosynthesis; malonyl-CoA from acetyl-CoA: step 1/1. In terms of biological role, component of the acetyl coenzyme A carboxylase (ACC) complex. Biotin carboxylase (BC) catalyzes the carboxylation of biotin on its carrier protein (BCCP) and then the CO(2) group is transferred by the transcarboxylase to acetyl-CoA to form malonyl-CoA. In Blochmanniella floridana, this protein is Acetyl-coenzyme A carboxylase carboxyl transferase subunit beta.